The following is a 602-amino-acid chain: Sodium- and chloride-dependent GABA transporter 2 (602 aa).

The span at 1–13 shows a compositional bias: polar residues; sequence MDSRVSGTTSNGE. The segment at 1–22 is disordered; it reads MDSRVSGTTSNGETKPVYPVME. At 1–40 the chain is on the cytoplasmic side; the sequence is MDSRVSGTTSNGETKPVYPVMEKKEEDGTLERGHWNNKME. Helical transmembrane passes span 41–61, 68–88, and 121–141; these read FVLS…FPYL, GAFF…VFLL, and IVIL…FYLF. At 142–206 the chain is on the extracellular side; it reads SSFTIDLPWG…GIQHLGALRW (65 aa). A disulfide bond links Cys153 and Cys162. Asn173 carries an N-linked (GlcNAc...) asparagine glycan. 2 helical membrane passes run 207-227 and 233-253; these read ELAL…WKGV and VVYF…IRGV. Asn269 is a glycosylation site (N-linked (GlcNAc...) asparagine). 7 helical membrane passes run 282-302, 319-339, 366-386, 418-438, 453-473, 490-510, and 528-548; these read AGTQ…ALGS, FLNS…LGFM, VVML…VVLL, VLIL…LTEG, GMCL…VYGA, PLIK…TFLF, and WWGD…IPAW. Topologically, residues 549-602 are cytoplasmic; that stretch reads SLYRLGTLKGPFRERIRQLMCPAEDLPQRNPAGPSAPATPRTSLLRLTELESHC. Thr587 is subject to Phosphothreonine. The residue at position 591 (Ser591) is a Phosphoserine.

The protein belongs to the sodium:neurotransmitter symporter (SNF) (TC 2.A.22) family. SLC6A13 subfamily. As to expression, expressed in brain, kidney, lung, liver and testis.

The protein localises to the cell membrane. The protein resides in the basolateral cell membrane. The catalysed reaction is 4-aminobutanoate(out) + chloride(out) + 2 Na(+)(out) = 4-aminobutanoate(in) + chloride(in) + 2 Na(+)(in). It catalyses the reaction taurine(out) + chloride(out) + 2 Na(+)(out) = taurine(in) + chloride(in) + 2 Na(+)(in). It carries out the reaction beta-alanine(out) + chloride(out) + 2 Na(+)(out) = beta-alanine(in) + chloride(in) + 2 Na(+)(in). The enzyme catalyses hypotaurine(out) + chloride(out) + 2 Na(+)(out) = hypotaurine(in) + chloride(in) + 2 Na(+)(in). With respect to regulation, GABA transport is inhibited by beta-alanine, 2,3-diaminopropionic acid and SNAP-5114. Mediates sodium- and chloride-dependent transport of gamma-aminobutyric acid (GABA). Mediates transport of beta-alanine. Can also mediate transport of taurine and hypotaurine. The protein is Sodium- and chloride-dependent GABA transporter 2 (SLC6A13) of Homo sapiens (Human).